A 235-amino-acid chain; its full sequence is 7-cyano-7-deazaguanine synthase (235 aa).

7-17 (CSGGLDSVSLA) is a binding site for ATP. Cysteine 185, cysteine 193, cysteine 196, and cysteine 199 together coordinate Zn(2+).

Belongs to the QueC family. The cofactor is Zn(2+).

It carries out the reaction 7-carboxy-7-deazaguanine + NH4(+) + ATP = 7-cyano-7-deazaguanine + ADP + phosphate + H2O + H(+). Its pathway is purine metabolism; 7-cyano-7-deazaguanine biosynthesis. In terms of biological role, catalyzes the ATP-dependent conversion of 7-carboxy-7-deazaguanine (CDG) to 7-cyano-7-deazaguanine (preQ(0)). This Allorhizobium ampelinum (strain ATCC BAA-846 / DSM 112012 / S4) (Agrobacterium vitis (strain S4)) protein is 7-cyano-7-deazaguanine synthase.